The following is a 426-amino-acid chain: Anaerobic glycerol-3-phosphate dehydrogenase subunit C (426 aa).

2 consecutive 4Fe-4S ferredoxin-type domains span residues serine 21 to glycine 53 and lysine 67 to isoleucine 99. [4Fe-4S] cluster contacts are provided by cysteine 32, cysteine 35, cysteine 38, cysteine 42, cysteine 79, cysteine 82, cysteine 85, and cysteine 89.

Composed of a catalytic GlpA/B dimer and of GlpC.

It localises to the cell inner membrane. It functions in the pathway polyol metabolism; glycerol degradation via glycerol kinase pathway; glycerone phosphate from sn-glycerol 3-phosphate (anaerobic route): step 1/1. Electron transfer protein; may also function as the membrane anchor for the GlpAB dimer. The sequence is that of Anaerobic glycerol-3-phosphate dehydrogenase subunit C (glpC) from Haemophilus influenzae (strain ATCC 51907 / DSM 11121 / KW20 / Rd).